The following is a 178-amino-acid chain: Adenine phosphoribosyltransferase (178 aa).

It belongs to the purine/pyrimidine phosphoribosyltransferase family. Homodimer.

Its subcellular location is the cytoplasm. The enzyme catalyses AMP + diphosphate = 5-phospho-alpha-D-ribose 1-diphosphate + adenine. It participates in purine metabolism; AMP biosynthesis via salvage pathway; AMP from adenine: step 1/1. Functionally, catalyzes a salvage reaction resulting in the formation of AMP, that is energically less costly than de novo synthesis. The chain is Adenine phosphoribosyltransferase from Bacteroides fragilis (strain YCH46).